A 167-amino-acid chain; its full sequence is MAEEQQANGAAAENQQQQVQFAIQRIYAKDISFETPSSPAIFRKEWKPDLKLDLNVKHEKIEDGVYEVVLTLTATNKVEDDVAFLCEVHQAGIFTIGEEVQDGQLAHMLGSFCPNILFPYARECVSNLVNRATFPQLNLAPVNFDAIFQRHMQQQAEQAQGQQTADA.

The protein belongs to the SecB family. As to quaternary structure, homotetramer, a dimer of dimers. One homotetramer interacts with 1 SecA dimer.

The protein localises to the cytoplasm. In terms of biological role, one of the proteins required for the normal export of preproteins out of the cell cytoplasm. It is a molecular chaperone that binds to a subset of precursor proteins, maintaining them in a translocation-competent state. It also specifically binds to its receptor SecA. The protein is Protein-export protein SecB of Idiomarina loihiensis (strain ATCC BAA-735 / DSM 15497 / L2-TR).